The following is a 273-amino-acid chain: Phosphatidylglycerol--prolipoprotein diacylglyceryl transferase (273 aa).

4 helical membrane-spanning segments follow: residues 18-38 (IPVR…YVVG), 47-67 (LPED…IICA), 89-109 (IWNG…TAYI), and 116-136 (VSFL…QIIG). Position 137 (Arg137) interacts with a 1,2-diacyl-sn-glycero-3-phospho-(1'-sn-glycerol). Helical transmembrane passes span 178–198 (VHPT…ILLI), 207–227 (GEIF…IEGM), and 238–258 (LRSA…AIIY).

It belongs to the Lgt family.

Its subcellular location is the cell membrane. The enzyme catalyses L-cysteinyl-[prolipoprotein] + a 1,2-diacyl-sn-glycero-3-phospho-(1'-sn-glycerol) = an S-1,2-diacyl-sn-glyceryl-L-cysteinyl-[prolipoprotein] + sn-glycerol 1-phosphate + H(+). Its pathway is protein modification; lipoprotein biosynthesis (diacylglyceryl transfer). Catalyzes the transfer of the diacylglyceryl group from phosphatidylglycerol to the sulfhydryl group of the N-terminal cysteine of a prolipoprotein, the first step in the formation of mature lipoproteins. The sequence is that of Phosphatidylglycerol--prolipoprotein diacylglyceryl transferase from Lysinibacillus sphaericus (strain C3-41).